We begin with the raw amino-acid sequence, 357 residues long: Maleylacetate reductase 1 (357 aa).

It belongs to the iron-containing alcohol dehydrogenase family.

It catalyses the reaction 3-oxoadipate + NAD(+) = maleylacetate + NADH + H(+). The enzyme catalyses 3-oxoadipate + NADP(+) = maleylacetate + NADPH + H(+). It participates in aromatic compound metabolism; 3-chlorocatechol degradation. Plays a major role in the degradation of chloroaromatic compounds by channeling maleylacetate and some of its substituted derivatives into the 3-oxoadipate pathway. This enzyme converts maleylacetate and 2-chloromaleylacetate with similar efficiencies. In Rhodococcus opacus (Nocardia opaca), this protein is Maleylacetate reductase 1 (macA).